The sequence spans 207 residues: MKVLVASNNAKKLGELRTILENAGLSSVEVVPLSAIDAYDEPVEDGRTFADNALIKARAGAHHSGLITIADDSGFAVEELNGMPGVLSARWSGQHGNDATNNELVLAQMKHVPEERRHAAFVSVCALVTPDGDEHIVEGRWEGRMLTAPRGANGFGYDPLFVPAEEDAAGTGRTSAEMSPAEKNAISHRGKALQQLVPIIAGYSTFF.

Residue Ser-7–Lys-12 participates in substrate binding. Asp-72 functions as the Proton acceptor in the catalytic mechanism. Asp-72 provides a ligand contact to Mg(2+). Substrate contacts are provided by residues Ser-73, Phe-155–Asp-158, Lys-183, and His-188–Arg-189.

The protein belongs to the HAM1 NTPase family. In terms of assembly, homodimer. Mg(2+) is required as a cofactor.

The enzyme catalyses XTP + H2O = XMP + diphosphate + H(+). It catalyses the reaction dITP + H2O = dIMP + diphosphate + H(+). The catalysed reaction is ITP + H2O = IMP + diphosphate + H(+). Pyrophosphatase that catalyzes the hydrolysis of nucleoside triphosphates to their monophosphate derivatives, with a high preference for the non-canonical purine nucleotides XTP (xanthosine triphosphate), dITP (deoxyinosine triphosphate) and ITP. Seems to function as a house-cleaning enzyme that removes non-canonical purine nucleotides from the nucleotide pool, thus preventing their incorporation into DNA/RNA and avoiding chromosomal lesions. This chain is dITP/XTP pyrophosphatase, found in Corynebacterium diphtheriae (strain ATCC 700971 / NCTC 13129 / Biotype gravis).